Reading from the N-terminus, the 859-residue chain is MAYFSSRLPIALLLIGISGFVCKQYVTVFYGIPAWRNATVPLICATTNRDTWGTVQCLPDNGDYTEIRLNITEAFDAWDNTVTQQAVDDVWRLFETSIKPCVKLTPLCVAMNCSKTETNPGNASSTTTTKPTTTSRGLKTINETDPCIKNDSCTGLGEEEIMQCNFSMTGLRRDELKQYKDTWYSEDLECNNTRKYTSRCYIRTCNTTIIQESCDKHYWDSLRFRYCAPPGFFLLRCNDTNYSGFMPNCSKVVASSCTRMMETQSSTWFGFNGTRAENRTYIYWHEKDNRTIISLNTYYNLSIHCKRPGNKTVVPIRTVSGLLFHSQPINKRPRQAWCWFKGNWTEAIKEVKRTIIKHPRYKGGAKNITSVKLVSEHGKGSDPETTYMWTNCRGEFLYCNMTWFLNWVENKTNTTRRNYAPCHIRQIINTWHKVGKNIYLPPREGELSCNSTVTSLIANINSDNSTTNISVSAEVSELYRLELGDYKLVEITPIGFAPTDVRRYSSVKPRNKRGVMVLGFLGFLAMAGSAMGATSLTLSAQSRTLLAGIVQQQQQPVDVVKRQQELLRLTVWGTKNLQARVTAIEKYLKDQAQLNSWGCAFRQVCHTTVPWPNETLTPNWNNMTWQQWEKQVHFLDANITALLEEAQIQQEKNMYELQKINSWDVFGNWFDLTSWIKYIHLGLYIVAGLVVLRIVVYIVQMLARLRKGYRPVFSSPPSYTQQIPIRKDRGQPANEETEEGGGNDGDYRSWPWQIEYIHFLLRQLRNLLIWLYNGCRTLLLKTFQILHQISTNLQPLRLPVAYLQYGISWFQEALRAAARATGETLASAGETLWEALRRAARAIIAIPRRIRQGLELTLL.

An N-terminal signal peptide occupies residues methionine 1 to lysine 23. The Extracellular segment spans residues glutamine 24–tyrosine 678. An N-linked (GlcNAc...) asparagine; by host glycan is attached at asparagine 37. Cysteine 44 and cysteine 57 form a disulfide bridge. 24 N-linked (GlcNAc...) asparagine; by host glycosylation sites follow: asparagine 70, asparagine 112, asparagine 122, asparagine 142, asparagine 150, asparagine 165, asparagine 191, asparagine 206, asparagine 238, asparagine 241, asparagine 248, asparagine 272, asparagine 278, asparagine 289, asparagine 300, asparagine 310, asparagine 343, asparagine 367, asparagine 400, asparagine 410, asparagine 413, asparagine 450, asparagine 464, and asparagine 468. 5 disulfide bridges follow: cysteine 101-cysteine 214, cysteine 108-cysteine 205, cysteine 113-cysteine 164, cysteine 227-cysteine 257, and cysteine 237-cysteine 249. A V1 region spans residues cysteine 113 to glutamine 163. The V2 stretch occupies residues cysteine 164–cysteine 205. Residues cysteine 305–tryptophan 337 form a V3 region. Residues cysteine 305 and cysteine 338 are joined by a disulfide bond. 2 disulfide bridges follow: cysteine 392-cysteine 449 and cysteine 399-cysteine 422. A V4 region spans residues cysteine 399 to cysteine 422. Positions serine 465 to valine 471 are V5. Residues glycine 514–threonine 534 form a fusion peptide region. The tract at residues leucine 577–glutamine 593 is immunosuppression. Residues asparagine 613, asparagine 622, and asparagine 638 are each glycosylated (N-linked (GlcNAc...) asparagine; by host). Residues glutamine 626–glutamine 647 adopt a coiled-coil conformation. The tract at residues lysine 659 to histidine 680 is MPER; binding to GalCer. The chain crosses the membrane as a helical span at residues isoleucine 679 to valine 699. Topologically, residues glutamine 700–leucine 859 are cytoplasmic. The YXXV motif; contains endocytosis signal motif lies at tyrosine 709–valine 712. Residues serine 715–aspartate 744 are disordered. Cysteine 775 carries the S-palmitoyl cysteine; by host lipid modification. Positions leucine 858 to leucine 859 match the Di-leucine internalization motif motif.

As to quaternary structure, the mature envelope protein (Env) consists of a homotrimer of non-covalently associated gp120-gp41 heterodimers. The resulting complex protrudes from the virus surface as a spike. There seems to be as few as 10 spikes on the average virion. Interacts with human CD4, CCR5 and CXCR4, to form a P4HB/PDI-CD4-CXCR4-gp120 complex. Gp120 also interacts with the C-type lectins CD209/DC-SIGN and CLEC4M/DC-SIGNR (collectively referred to as DC-SIGN(R)). Gp120 and gp41 interact with GalCer. In terms of assembly, the mature envelope protein (Env) consists of a homotrimer of non-covalently associated gp120-gp41 heterodimers. The resulting complex protrudes from the virus surface as a spike. There seems to be as few as 10 spikes on the average virion. In terms of processing, specific enzymatic cleavages in vivo yield mature proteins. Envelope glycoproteins are synthesized as an inactive precursor that is heavily N-glycosylated and processed likely by host cell furin in the Golgi to yield the mature SU and TM proteins. The cleavage site between SU and TM requires the minimal sequence [KR]-X-[KR]-R. Post-translationally, palmitoylation of the transmembrane protein and of Env polyprotein (prior to its proteolytic cleavage) is essential for their association with host cell membrane lipid rafts. Palmitoylation is therefore required for envelope trafficking to classical lipid rafts, but not for viral replication.

The protein localises to the virion membrane. Its subcellular location is the host cell membrane. The protein resides in the host endosome membrane. In terms of biological role, the surface protein gp120 (SU) attaches the virus to the host lymphoid cell by binding to the primary receptor CD4. This interaction induces a structural rearrangement creating a high affinity binding site for a chemokine coreceptor like CXCR4 and/or CCR5. This peculiar 2 stage receptor-interaction strategy allows gp120 to maintain the highly conserved coreceptor-binding site in a cryptic conformation, protected from neutralizing antibodies. Since CD4 also displays a binding site for the disulfide-isomerase P4HB/PDI, a P4HB/PDI-CD4-CXCR4-gp120 complex may form. In that complex, P4HB/PDI could reach and reduce gp120 disulfide bonds, causing major conformational changes in gp120. TXN, another PDI family member could also be involved in disulfide rearrangements in Env during fusion. These changes are transmitted to the transmembrane protein gp41 and are thought to activate its fusogenic potential by unmasking its fusion peptide. Its function is as follows. The surface protein gp120 is a ligand for CD209/DC-SIGN and CLEC4M/DC-SIGNR, which are respectively found on dendritic cells (DCs), and on endothelial cells of liver sinusoids and lymph node sinuses. These interactions allow capture of viral particles at mucosal surfaces by these cells and subsequent transmission to permissive cells. DCs are professional antigen presenting cells, critical for host immunity by inducing specific immune responses against a broad variety of pathogens. They act as sentinels in various tissues where they take up antigen, process it, and present it to T-cells following migration to lymphoid organs. HIV subverts the migration properties of dendritic cells to gain access to CD4+ T-cells in lymph nodes. Virus transmission to permissive T-cells occurs either in trans (without DCs infection, through viral capture and transmission), or in cis (following DCs productive infection, through the usual CD4-gp120 interaction), thereby inducing a robust infection. In trans infection, bound virions remain infectious over days and it is proposed that they are not degraded, but protected in non-lysosomal acidic organelles within the DCs close to the cell membrane thus contributing to the viral infectious potential during DCs' migration from the periphery to the lymphoid tissues. On arrival at lymphoid tissues, intact virions recycle back to DCs' cell surface allowing virus transmission to CD4+ T-cells. Virion capture also seems to lead to MHC-II-restricted viral antigen presentation, and probably to the activation of HIV-specific CD4+ cells. The transmembrane protein gp41 (TM) acts as a class I viral fusion protein. Under the current model, the protein has at least 3 conformational states: pre-fusion native state, pre-hairpin intermediate state, and post-fusion hairpin state. During fusion of viral and target intracellular membranes, the coiled coil regions (heptad repeats) assume a trimer-of-hairpins structure, positioning the fusion peptide in close proximity to the C-terminal region of the ectodomain. The formation of this structure appears to drive apposition and subsequent fusion of viral and target cell membranes. Complete fusion occurs in host cell endosomes and is dynamin-dependent, however some lipid transfer might occur at the plasma membrane. The virus undergoes clathrin-dependent internalization long before endosomal fusion, thus minimizing the surface exposure of conserved viral epitopes during fusion and reducing the efficacy of inhibitors targeting these epitopes. Membranes fusion leads to delivery of the nucleocapsid into the cytoplasm. Functionally, the envelope glycoprotein gp160 precursor down-modulates cell surface CD4 antigen by interacting with it in the endoplasmic reticulum and blocking its transport to the cell surface. In terms of biological role, the gp120-gp41 heterodimer seems to contribute to T-cell depletion during HIV-1 infection. The envelope glycoproteins expressed on the surface of infected cells induce apoptosis through an interaction with uninfected cells expressing the receptor (CD4) and the coreceptors CXCR4 or CCR5. This type of bystander killing may be obtained by at least three distinct mechanisms. First, the interaction between the 2 cells can induce cellular fusion followed by nuclear fusion within the syncytium. Syncytia are condemned to die from apoptosis. Second, the 2 interacting cells may not fuse entirely and simply exchange plasma membrane lipids, after a sort of hemifusion process, followed by rapid death. Third, it is possible that virus-infected cells, on the point of undergoing apoptosis, fuse with CD4-expressing cells, in which case apoptosis is rapidly transmitted from one cell to the other and thus occurs in a sort of contagious fashion. Its function is as follows. The gp120-gp41 heterodimer allows rapid transcytosis of the virus through CD4 negative cells such as simple epithelial monolayers of the intestinal, rectal and endocervical epithelial barriers. Both gp120 and gp41 specifically recognize glycosphingolipids galactosyl-ceramide (GalCer) or 3' sulfo-galactosyl-ceramide (GalS) present in the lipid rafts structures of epithelial cells. Binding to these alternative receptors allows the rapid transcytosis of the virus through the epithelial cells. This transcytotic vesicle-mediated transport of virions from the apical side to the basolateral side of the epithelial cells does not involve infection of the cells themselves. The sequence is that of Envelope glycoprotein gp160 (env) from Human immunodeficiency virus type 2 subtype B (isolate D205) (HIV-2).